The following is a 179-amino-acid chain: uncharacterized protein (179 aa).

The segment at residues 1–27 (MKTISKQLSAVIFPFIFSACVSQSASS) is a signal peptide (or 24).

This is an uncharacterized protein from Haemophilus influenzae (strain ATCC 51907 / DSM 11121 / KW20 / Rd).